Here is a 235-residue protein sequence, read N- to C-terminus: Ubiquinone/menaquinone biosynthesis C-methyltransferase UbiE (235 aa).

S-adenosyl-L-methionine contacts are provided by Thr59, Asp84, and Ser123.

It belongs to the class I-like SAM-binding methyltransferase superfamily. MenG/UbiE family.

The catalysed reaction is a 2-demethylmenaquinol + S-adenosyl-L-methionine = a menaquinol + S-adenosyl-L-homocysteine + H(+). It carries out the reaction a 2-methoxy-6-(all-trans-polyprenyl)benzene-1,4-diol + S-adenosyl-L-methionine = a 5-methoxy-2-methyl-3-(all-trans-polyprenyl)benzene-1,4-diol + S-adenosyl-L-homocysteine + H(+). The protein operates within quinol/quinone metabolism; menaquinone biosynthesis; menaquinol from 1,4-dihydroxy-2-naphthoate: step 2/2. Its pathway is cofactor biosynthesis; ubiquinone biosynthesis. In terms of biological role, methyltransferase required for the conversion of demethylmenaquinol (DMKH2) to menaquinol (MKH2) and the conversion of 2-polyprenyl-6-methoxy-1,4-benzoquinol (DDMQH2) to 2-polyprenyl-3-methyl-6-methoxy-1,4-benzoquinol (DMQH2). The protein is Ubiquinone/menaquinone biosynthesis C-methyltransferase UbiE of Campylobacter jejuni subsp. jejuni serotype O:23/36 (strain 81-176).